We begin with the raw amino-acid sequence, 287 residues long: tRNA uridine(34) hydroxylase (287 aa).

The Rhodanese domain maps to 132 to 226 (EGRPVVMLDT…YFEEVGGAHY (95 aa)). Catalysis depends on Cys-186, which acts as the Cysteine persulfide intermediate.

Belongs to the TrhO family.

It carries out the reaction uridine(34) in tRNA + AH2 + O2 = 5-hydroxyuridine(34) in tRNA + A + H2O. In terms of biological role, catalyzes oxygen-dependent 5-hydroxyuridine (ho5U) modification at position 34 in tRNAs. The chain is tRNA uridine(34) hydroxylase from Paraburkholderia xenovorans (strain LB400).